A 297-amino-acid chain; its full sequence is MTKSGSKSEKFLLIDGNYLVHRSYYVSFKFKNNFRSTIYLFFQTIIKIIKNLNPENIFIAFDEEGGTWRHDLCKEYKSQRSKMEDEFWNIFKAIREILDSINLNSGGFRGHEADDVIATITSKFKDENQIYIFSRDKDLLQLIDKNVYITHDNELKNLISIENFYQNFQLEPDQIVDFKAIAGDSSDNLKGIAGIGEKGAKNLLNNFKSLEKIFDSLESTNLISKAQKQKIRDGKEQALFLKKIVTLNKEVPMKLEKELFAIKININEEILEKLDKYDSRYVLKQFEKALESDDYLW.

The region spanning 171–262 is the 5'-3' exonuclease domain; sequence EPDQIVDFKA…MKLEKELFAI (92 aa).

Functionally, 5'-3' exonuclease acting preferentially on double-stranded DNA. This chain is 5'-3' exonuclease (polA), found in Mycoplasmopsis pulmonis (strain UAB CTIP) (Mycoplasma pulmonis).